Reading from the N-terminus, the 328-residue chain is Biotin synthase (328 aa).

Residues N43–R272 form the Radical SAM core domain. 3 residues coordinate [4Fe-4S] cluster: C58, C62, and C65. C103, C135, C195, and R267 together coordinate [2Fe-2S] cluster.

This sequence belongs to the radical SAM superfamily. Biotin synthase family. Homodimer. [4Fe-4S] cluster serves as cofactor. Requires [2Fe-2S] cluster as cofactor.

It catalyses the reaction (4R,5S)-dethiobiotin + (sulfur carrier)-SH + 2 reduced [2Fe-2S]-[ferredoxin] + 2 S-adenosyl-L-methionine = (sulfur carrier)-H + biotin + 2 5'-deoxyadenosine + 2 L-methionine + 2 oxidized [2Fe-2S]-[ferredoxin]. The protein operates within cofactor biosynthesis; biotin biosynthesis; biotin from 7,8-diaminononanoate: step 2/2. Functionally, catalyzes the conversion of dethiobiotin (DTB) to biotin by the insertion of a sulfur atom into dethiobiotin via a radical-based mechanism. The polypeptide is Biotin synthase (Allorhizobium ampelinum (strain ATCC BAA-846 / DSM 112012 / S4) (Agrobacterium vitis (strain S4))).